The primary structure comprises 57 residues: Large ribosomal subunit protein bL32 (57 aa).

The segment at 1–37 (MAVQQNKPTRSKRGMRRSHDALTAVTSLSVDKTSGEK) is disordered.

The protein belongs to the bacterial ribosomal protein bL32 family.

The polypeptide is Large ribosomal subunit protein bL32 (Escherichia fergusonii (strain ATCC 35469 / DSM 13698 / CCUG 18766 / IAM 14443 / JCM 21226 / LMG 7866 / NBRC 102419 / NCTC 12128 / CDC 0568-73)).